A 214-amino-acid polypeptide reads, in one-letter code: Redox-sensing transcriptional repressor Rex (214 aa).

The segment at residues leucine 17–phenylalanine 56 is a DNA-binding region (H-T-H motif). Glycine 91 to glycine 96 contributes to the NAD(+) binding site.

The protein belongs to the transcriptional regulatory Rex family. Homodimer.

The protein resides in the cytoplasm. Modulates transcription in response to changes in cellular NADH/NAD(+) redox state. The polypeptide is Redox-sensing transcriptional repressor Rex (Streptococcus pyogenes serotype M1).